The sequence spans 642 residues: MSKVIGIDLGTTNSCVAVMEGKNAKVIENAEGMRTTPSMTAFTESGERLVGQPAKRQAVTNPTSTLFAIKRLIGRRFEDPITKKDMNLVPYHIVAGDNGDAWVEARDAKYSPSQVSAFILQKMKETAEGYLGEKVTQAVITVPAYFNDAQRQATKDAGRIAGLEVLRIINEPTAAALAYGLEKKGAGTIAVYDLGGGTFDVSVLEIGDGVFEVKSTNGDTFLGGEDFDARIMDYLADEFKKEQGIDLRKDRLALQRLKEAAEKAKIELSSSMQTEVNLPFITADASGPKHLNIKLTRSKLEALVEDLVARTVEPCKAALKDAGVKASEIDEVILVGGMTRMPKIQEVVKEFFGREPHKGVNPDEVVAIGAAIQGGVLKGEVKDVLLLDVTPLSLGIETLGGVFTRLIDRNTTIPTRKSQVFSTAEDNQTAVTIRVFQGEREMAADNKVLGQFDLVGIPPAPRGVPQVEVTFDIDANGLVNVSAKDKATGKEQQIRIQASGGLSDADIEKMVKEAEAHAAEDKKRKELIEARNHADGLIHTTEKSLKEFGDKAGAELTGAIEKEITALKAVMDGDDVEAIKAKTESLMQASMKLGEAMYKAQEAAGGAEAEAAAGGHGGASGSHDDKVVDADFEEVDGDKKGK.

Threonine 198 is subject to Phosphothreonine; by autocatalysis. The tract at residues glutamate 602–lysine 642 is disordered. Residues alanine 603–alanine 613 are compositionally biased toward low complexity.

It belongs to the heat shock protein 70 family.

Acts as a chaperone. The sequence is that of Chaperone protein DnaK from Paramagnetospirillum magneticum (strain ATCC 700264 / AMB-1) (Magnetospirillum magneticum).